The following is a 393-amino-acid chain: Acetylornithine aminotransferase 1 (393 aa).

R131 is a binding site for N(2)-acetyl-L-ornithine. 215-218 lines the pyridoxal 5'-phosphate pocket; the sequence is DEVQ. Residue K244 is modified to N6-(pyridoxal phosphate)lysine. T272 serves as a coordination point for N(2)-acetyl-L-ornithine. Pyridoxal 5'-phosphate is bound at residue T273.

The protein belongs to the class-III pyridoxal-phosphate-dependent aminotransferase family. ArgD subfamily. As to quaternary structure, homodimer. It depends on pyridoxal 5'-phosphate as a cofactor.

It is found in the cytoplasm. It carries out the reaction N(2)-acetyl-L-ornithine + 2-oxoglutarate = N-acetyl-L-glutamate 5-semialdehyde + L-glutamate. The protein operates within amino-acid biosynthesis; L-arginine biosynthesis; N(2)-acetyl-L-ornithine from L-glutamate: step 4/4. This chain is Acetylornithine aminotransferase 1, found in Bordetella parapertussis (strain 12822 / ATCC BAA-587 / NCTC 13253).